The following is a 446-amino-acid chain: C4-dicarboxylate transport protein (446 aa).

A run of 9 helical transmembrane segments spans residues 20 to 40 (HLYVQVLAAIAIGILLGHFYP), 56 to 76 (LVKMVIAPVIFLTVVTGIAGM), 91 to 111 (IYFLTFSTLALIIGLIIANVV), 160 to 180 (GDILQVLFFSVLFGIALAGVG), 200 to 220 (LVHILMKAAPIGAFGAMAFTI), 233 to 253 (FLILTFYITSFLFVVVVLGLV), 319 to 339 (IYMTLAALFIAQATDIHLSLG), 344 to 364 (LLLVAMLSSKGAAGITGAGFI), and 367 to 387 (AATLSVVPTVPLAGMALILGI).

It belongs to the dicarboxylate/amino acid:cation symporter (DAACS) (TC 2.A.23) family.

Its subcellular location is the cell inner membrane. Functionally, responsible for the transport of dicarboxylates such as succinate, fumarate, and malate from the periplasm across the membrane. In Azorhizobium caulinodans (strain ATCC 43989 / DSM 5975 / JCM 20966 / LMG 6465 / NBRC 14845 / NCIMB 13405 / ORS 571), this protein is C4-dicarboxylate transport protein.